A 105-amino-acid chain; its full sequence is Nucleoid-associated protein SSP2277 (105 aa).

The segment at 1 to 41 is disordered; it reads MRGGGNMQQMMKQMQKMQKKMGEEQEKLKEEKVQGTAGGGM. Residues 7-16 are compositionally biased toward low complexity; it reads MQQMMKQMQK. The segment covering 20 to 33 has biased composition (basic and acidic residues); the sequence is KMGEEQEKLKEEKV.

Belongs to the YbaB/EbfC family. Homodimer.

Its subcellular location is the cytoplasm. It is found in the nucleoid. In terms of biological role, binds to DNA and alters its conformation. May be involved in regulation of gene expression, nucleoid organization and DNA protection. The polypeptide is Nucleoid-associated protein SSP2277 (Staphylococcus saprophyticus subsp. saprophyticus (strain ATCC 15305 / DSM 20229 / NCIMB 8711 / NCTC 7292 / S-41)).